Reading from the N-terminus, the 102-residue chain is Acid shock protein (102 aa).

A signal peptide spans 1 to 21 (MKKVLALVVAAAMGLSSAAFA). A compositionally biased stretch (low complexity) spans 22–41 (AETATTPAPTATTTKAAPAK). Residues 22–58 (AETATTPAPTATTTKAAPAKTTHHKKQHKAAPAQKAQ) constitute a propeptide that is removed on maturation. A disordered region spans residues 22-102 (AETATTPAPT…PAKPAAQPAA (81 aa)). Basic residues predominate over residues 80–90 (AAKKHAGKHGH). The span at 91–102 (QQPAKPAAQPAA) shows a compositional bias: low complexity.

It belongs to the Asr family. Proteolytic processing gives rise to the active protein.

The protein resides in the periplasm. Functionally, required for growth and/or survival at acidic conditions. The polypeptide is Acid shock protein (Shigella flexneri).